Here is a 631-residue protein sequence, read N- to C-terminus: Polyadenylate-binding protein 3 (631 aa).

4 consecutive RRM domains span residues 11–89 (ASLY…WSQR), 99–175 (GNIF…QFKS), 191–268 (PNVY…RAQK), and 294–370 (VNLY…LAQR). Position 140 is a phosphotyrosine (tyrosine 140). Serine 315 bears the Phosphoserine mark. Lysine 361 carries the N6,N6-dimethyllysine; alternate modification. Residue lysine 361 forms a Glycyl lysine isopeptide (Lys-Gly) (interchain with G-Cter in SUMO2); alternate linkage. At tyrosine 364 the chain carries Phosphotyrosine. Omega-N-methylarginine is present on residues arginine 426, arginine 430, and arginine 449. At arginine 501 the chain carries Dimethylated arginine. An Omega-N-methylarginine modification is found at arginine 513. The region spanning 537–614 (QETLTASRLA…AVAVLQAHQA (78 aa)) is the PABC domain.

It belongs to the polyadenylate-binding protein type-1 family. Testis specific.

It is found in the cytoplasm. Functionally, binds the poly(A) tail of mRNA. May be involved in cytoplasmic regulatory processes of mRNA metabolism. Binds poly(A) with a slightly lower affinity as compared to PABPC1. The sequence is that of Polyadenylate-binding protein 3 (PABPC3) from Homo sapiens (Human).